The sequence spans 250 residues: NAD-dependent protein deacylase (250 aa).

A Deacetylase sirtuin-type domain is found at 1 to 250 (MIVEVARVLA…VVHEVRRLLQ (250 aa)). NAD(+) is bound at residue 20-39 (GAGISAESGVPTFRGKDGLW). Substrate contacts are provided by tyrosine 64 and arginine 67. 98–101 (QNVD) provides a ligand contact to NAD(+). Histidine 116 serves as the catalytic Proton acceptor. Zn(2+) contacts are provided by cysteine 124, cysteine 127, cysteine 150, and cysteine 153. NAD(+)-binding positions include 190 to 192 (GTS), 216 to 218 (NVE), and alanine 234.

It belongs to the sirtuin family. Class III subfamily. The cofactor is Zn(2+).

It is found in the cytoplasm. The enzyme catalyses N(6)-acetyl-L-lysyl-[protein] + NAD(+) + H2O = 2''-O-acetyl-ADP-D-ribose + nicotinamide + L-lysyl-[protein]. It carries out the reaction N(6)-succinyl-L-lysyl-[protein] + NAD(+) + H2O = 2''-O-succinyl-ADP-D-ribose + nicotinamide + L-lysyl-[protein]. Functionally, NAD-dependent lysine deacetylase and desuccinylase that specifically removes acetyl and succinyl groups on target proteins. Modulates the activities of several proteins which are inactive in their acylated form. Deacetylates the N-terminal lysine residue of Alba, the major archaeal chromatin protein and that, in turn, increases Alba's DNA binding affinity, thereby repressing transcription. This chain is NAD-dependent protein deacylase, found in Pyrococcus abyssi (strain GE5 / Orsay).